A 451-amino-acid chain; its full sequence is NADH-quinone oxidoreductase subunit D (451 aa).

This sequence belongs to the complex I 49 kDa subunit family. NDH-1 is composed of 14 different subunits. Subunits NuoB, C, D, E, F, and G constitute the peripheral sector of the complex.

Its subcellular location is the cell membrane. It carries out the reaction a quinone + NADH + 5 H(+)(in) = a quinol + NAD(+) + 4 H(+)(out). Its function is as follows. NDH-1 shuttles electrons from NADH, via FMN and iron-sulfur (Fe-S) centers, to quinones in the respiratory chain. The immediate electron acceptor for the enzyme in this species is believed to be a menaquinone. Couples the redox reaction to proton translocation (for every two electrons transferred, four hydrogen ions are translocated across the cytoplasmic membrane), and thus conserves the redox energy in a proton gradient. This is NADH-quinone oxidoreductase subunit D from Mycolicibacterium gilvum (strain PYR-GCK) (Mycobacterium gilvum (strain PYR-GCK)).